The following is a 1391-amino-acid chain: DNA-directed RNA polymerase subunit beta' (1391 aa).

4 residues coordinate Zn(2+): Cys72, Cys74, Cys87, and Cys90. Positions 462, 464, and 466 each coordinate Mg(2+). Positions 816, 890, 897, and 900 each coordinate Zn(2+).

Belongs to the RNA polymerase beta' chain family. The RNAP catalytic core consists of 2 alpha, 1 beta, 1 beta' and 1 omega subunit. When a sigma factor is associated with the core the holoenzyme is formed, which can initiate transcription. The cofactor is Mg(2+). It depends on Zn(2+) as a cofactor.

The enzyme catalyses RNA(n) + a ribonucleoside 5'-triphosphate = RNA(n+1) + diphosphate. Functionally, DNA-dependent RNA polymerase catalyzes the transcription of DNA into RNA using the four ribonucleoside triphosphates as substrates. The protein is DNA-directed RNA polymerase subunit beta' of Neisseria meningitidis serogroup A / serotype 4A (strain DSM 15465 / Z2491).